The following is a 468-amino-acid chain: Aldehyde dehydrogenase family 3 member B1 (468 aa).

An N-acetylmethionine modification is found at Met-1. An NAD(+)-binding site is contributed by 188-193 (GNPQVG). Residues Glu-210 and Cys-244 contribute to the active site. A lipid anchor (S-palmitoyl cysteine) is attached at Cys-463. A Cysteine methyl ester modification is found at Cys-465. The S-geranylgeranyl cysteine moiety is linked to residue Cys-465. A propeptide spans 466-468 (TLL) (removed in mature form).

The protein belongs to the aldehyde dehydrogenase family. In terms of processing, dually lipidated in the C-terminus; prenylation occurs prior to, and is a prerequisite for palmitoylation. It is also required for activity towards long-chain substrates.

It is found in the cell membrane. It carries out the reaction an aldehyde + NAD(+) + H2O = a carboxylate + NADH + 2 H(+). The catalysed reaction is a long-chain fatty aldehyde + NAD(+) + H2O = a long-chain fatty acid + NADH + 2 H(+). It catalyses the reaction a medium-chain fatty aldehyde + NAD(+) + H2O = a medium-chain fatty acid + NADH + 2 H(+). The enzyme catalyses octanal + NAD(+) + H2O = octanoate + NADH + 2 H(+). It carries out the reaction nonanal + NAD(+) + H2O = nonanoate + NADH + 2 H(+). The catalysed reaction is hexadecanoate + NADH + 2 H(+) = hexadecanal + NAD(+) + H2O. It catalyses the reaction (2E)-octenal + NAD(+) + H2O = (2E)-octenoate + NADH + 2 H(+). The enzyme catalyses (E)-non-2-enal + NAD(+) + H2O = (E)-non-2-enoate + NADH + 2 H(+). It carries out the reaction (E)-4-hydroxynon-2-enal + NAD(+) + H2O = (E)-4-hydroxynon-2-enoate + NADH + 2 H(+). The catalysed reaction is (2E)-hexadecenal + NAD(+) + H2O = (E)-hexadec-2-enoate + NADH + 2 H(+). It catalyses the reaction benzaldehyde + NAD(+) + H2O = benzoate + NADH + 2 H(+). The enzyme catalyses an aldehyde + NADP(+) + H2O = a carboxylate + NADPH + 2 H(+). It carries out the reaction a medium-chain fatty aldehyde + NADP(+) + H2O = a medium-chain fatty acid + NADPH + 2 H(+). The catalysed reaction is hexanal + NADP(+) + H2O = hexanoate + NADPH + 2 H(+). It catalyses the reaction octanal + NADP(+) + H2O = octanoate + NADPH + 2 H(+). The enzyme catalyses nonanal + NADP(+) + H2O = nonanoate + NADPH + 2 H(+). It carries out the reaction (2E)-octenal + NADP(+) + H2O = (2E)-octenoate + NADPH + 2 H(+). The catalysed reaction is (E)-non-2-enal + NADP(+) + H2O = (E)-non-2-enoate + NADPH + 2 H(+). It catalyses the reaction (E)-4-hydroxynon-2-enal + NADP(+) + H2O = (E)-4-hydroxynon-2-enoate + NADPH + 2 H(+). The enzyme catalyses benzaldehyde + NADP(+) + H2O = benzoate + NADPH + 2 H(+). It participates in alcohol metabolism; ethanol degradation; acetate from ethanol: step 2/2. Oxidizes medium and long chain saturated and unsaturated fatty aldehydes generated in the plasma membrane into non-toxic fatty acids. May have a protective role against the cytotoxicity induced by lipid peroxidation. Short-chain fatty aldehydes are not good substrates. Can use both NADP(+) and NAD(+) as electron acceptor in vitro, however in vivo preference will depend on their tissue levels. Low activity towards acetaldehyde and 3,4-dihydroxyphenylacetaldehyde. Able to metabolize aromatic aldehydes such as benzaldehyde to their acid form. The polypeptide is Aldehyde dehydrogenase family 3 member B1 (ALDH3B1) (Bos taurus (Bovine)).